Consider the following 934-residue polypeptide: Aconitate hydratase A (934 aa).

The disordered stretch occupies residues 398 to 454 (EPVDESLPAKRMDSEGAVQKEGEDVAGYNSSRAGHGESAAEGAAGRQSNPVVVSSPN). A compositionally biased stretch (basic and acidic residues) spans 404–420 (LPAKRMDSEGAVQKEGE). The segment covering 427 to 445 (SSRAGHGESAAEGAAGRQS) has biased composition (low complexity). 3 residues coordinate [4Fe-4S] cluster: C473, C539, and C542.

This sequence belongs to the aconitase/IPM isomerase family. As to quaternary structure, monomer. [4Fe-4S] cluster serves as cofactor.

It catalyses the reaction citrate = D-threo-isocitrate. The enzyme catalyses (2S,3R)-3-hydroxybutane-1,2,3-tricarboxylate = 2-methyl-cis-aconitate + H2O. Its pathway is carbohydrate metabolism; tricarboxylic acid cycle; isocitrate from oxaloacetate: step 2/2. The protein operates within organic acid metabolism; propanoate degradation. Functionally, involved in the catabolism of short chain fatty acids (SCFA) via the tricarboxylic acid (TCA)(acetyl degradation route) and probably via the 2-methylcitrate cycle I (propionate degradation route). Catalyzes the reversible isomerization of citrate to isocitrate via cis-aconitate. Could catalyze the hydration of 2-methyl-cis-aconitate to yield (2R,3S)-2-methylisocitrate. The apo form of AcnA functions as a RNA-binding regulatory protein. The sequence is that of Aconitate hydratase A (acn) from Corynebacterium diphtheriae (strain ATCC 700971 / NCTC 13129 / Biotype gravis).